The sequence spans 1775 residues: MMVFQSFILGNLVSLCMKIINSVVVVGLYYGFLTTFSIGPSYLFLLRARVMDEGEEGTEKKVSATTGFIAGQLMMFISIYYAPLHLALGRPHTITVLALPYLLFHFFWNNHKHFFDYGSTTRNEMRNLRIQCVFLNNLIFQLFNHFILPSSMLARLVNIYMFRCNNKMLFVTSSFVGWLIGHILFMKWVGLVLVWIQQNNSIRSNVLIRSNKYKFLVSELRNSMARIFSILLFITCVYYLGRIPSPIFTKKLKGTSERGGTKQDQEVSTEEAPFPSLFSEEREDLDKIDEMEQIRVNGKEKINKDDEFHVRTYYNSKTVSENRDGNKENSNLEFFKIKKKEDCFLGFAKPFVTLVFDYKRWNRPNRYIKNDKIEHTVRNEMSQYFFYTCQNDGKEQISFTYPANLSTFFEMMQKKIPPFTREKAPSDQVFTCWSLINEEKKENLQNEFFNRIETLDKEWSVENILEKTTRFCHNETKTEYLPKIYDPFLHGISRGRIKKLPPFQIITETYIKNNIGGSWINKIHGILLKINSRKFEQTLEKFNRKSLSIEEKLSCFSEPQEEQNNSEEEIKIFKFLFNVVITDNNEQTFIKNLIYFDEINKKVPRWSYKLISDLEEMEAEDEQSILAEPGIRSRKAKRIVVFTEKETHNETFKENQSSDEKEEISFIRFSQQPDFRREIIKGSMRSQRRKTVIWEFFQAKAHSPFFFDRIDKLFFFSFDSFSFDIWGLKKKILRNFMWKNKTIYKTKAEQSKIEEKKRLQIAETWDNVRFAQIIRSSVLVTQSILRKNIILPLLIIIKNSIRVLLFQIPEWSEDLKDLKREMHVKCTYNGVQLSEKEFPRKWLTDGIQIKIIFPFYLKPWHNSKFQSSQKAQRKKAKDTEKKNDFCFLTVWGRETELPFGSAKKKPSFFEPIYKELKKRIKKFKTKPFLVLRIFKEREKFFLKVAKEMKNWIIKNFLFLKGKIKNLSKRNIIPVFGPREIYEVNETKNDSIMSNQMIENLSVQKKSMEWTNSLLSENKLKNLIDRIKTIRNQTEEISKEKENLTNSCNKPRYDSKIIESSKKSWQTLKRKNTRLIRKSFFFIKFCIEQLSIAIFLGIINIPRITTQLFFESTKTILDKYIYKNEENGKKINKKKTTIYFISTIKNLLSKKKKISYDLCSLSQAYVFYKLSKMQVSNVSKLKAVLEYKICITSFFVKNKIKDFFQEQGIFDYELKDKTFVNSEVNQWKNWLRSHSQYNLPQIAWARLGTQKWKNKINQDSIVLNRSLTKEDSYEKKIFDNYKKQNFFEADSLLNPKHNVKKDYIYNLFCYKSINSTEKNLDMAIGIALDNYLVSCFLEKYNIRGRRKIGHRKYLDWRMLNFWFRKNVNSEPWVDTKSKKKYIKTQVQNYQRIEKITKTGVANEKNFFFDWMGMNEEIINNRVTNLEFFFFPEFLLFSSTYKMKPWVIPIKLLLFNFNEKKNINKKITPNKKGFIPSNAKKFLEFFNLNKEEKESAGQGERESDNEKKKNLESALSKQEKNIEENYAELKIKKHKTKKQHKSNTEVEIDSFMGRDSRFQMRWNSFFNKKIITTLKVYCFLVRLKNPNEIILSSIERGEINPDILLISKTLPFSQLLKKGMWVFEPVRLSLKNDGQLIIYRTIGISLVHKKKNKISKRYKKKSYIDKKNNCDFFVPENILSPKRRREFRILICFNLKKKNARDRNSRFDKNIPNLTTVLHKKKNLDKDKNNLIKLKSFLWPNFRLEDLACMNRYWFNTTNGNHFGMIRIHMYTRFQIH.

The next 6 membrane-spanning stretches (helical) occupy residues 19–39 (IINSVVVVGLYYGFLTTFSIG), 68–88 (FIAGQLMMFISIYYAPLHLAL), 91–111 (PHTITVLALPYLLFHFFWNNH), 133–153 (VFLNNLIFQLFNHFILPSSML), 176–196 (VGWLIGHILFMKWVGLVLVWI), and 227–247 (IFSILLFITCVYYLGRIPSPI). Positions 1491-1512 (KESAGQGERESDNEKKKNLESA) are disordered.

The protein belongs to the TIC214 family. Part of the Tic complex.

The protein resides in the plastid. The protein localises to the chloroplast inner membrane. In terms of biological role, involved in protein precursor import into chloroplasts. May be part of an intermediate translocation complex acting as a protein-conducting channel at the inner envelope. The polypeptide is Protein TIC 214 (Lobularia maritima (Sweet alyssum)).